A 590-amino-acid chain; its full sequence is KNR4/SMI1 homolog 2 (590 aa).

Disordered stretches follow at residues Ser59–Asn97, Phe216–Gly239, and Thr407–Leu590. The segment covering Gly71–Val85 has biased composition (polar residues). Low complexity predominate over residues Gln217–Gln226. Polar residues predominate over residues Pro430 to Lys454. Composition is skewed to basic and acidic residues over residues Pro470–Ser481 and Glu489–Asp515. Over residues Asp516 to Lys528 the composition is skewed to acidic residues. Residues Thr554 to Gln568 are compositionally biased toward basic residues. The segment covering Asn576 to Leu590 has biased composition (acidic residues).

It belongs to the KNR4/SMI1 family.

This Debaryomyces hansenii (strain ATCC 36239 / CBS 767 / BCRC 21394 / JCM 1990 / NBRC 0083 / IGC 2968) (Yeast) protein is KNR4/SMI1 homolog 2.